Reading from the N-terminus, the 183-residue chain is Capsid protein (183 aa).

Residues 143–183 form a disordered region; the sequence is LPETAVVRRRGRSPRRRTPSPRRRRSQSPRRRRSQSPASQC. Residues 149-176 are compositionally biased toward basic residues; the sequence is VRRRGRSPRRRTPSPRRRRSQSPRRRRS. Phosphoserine; by host is present on residues S155, S162, and S170. A 1; half-length repeat occupies 155-161; the sequence is SPRRRTP. A 3 X 8 AA repeats of S-P-R-R-R-[PR]-S-Q region spans residues 155 to 177; that stretch reads SPRRRTPSPRRRRSQSPRRRRSQ. Residues 158 to 175 carry the Bipartite nuclear localization signal motif; sequence RRTPSPRRRRSQSPRRRR. 2 repeat units span residues 162–169 and 170–177. Residues 177-183 form an RNA binding region; that stretch reads QSPASQC.

It belongs to the orthohepadnavirus core antigen family. Homodimerizes, then multimerizes. Interacts with cytosol exposed regions of viral L glycoprotein present in the reticulum-to-Golgi compartment. Interacts with human FLNB. Phosphorylated form interacts with host importin alpha; this interaction depends on the exposure of the NLS, which itself depends upon genome maturation and/or phosphorylation of the capsid protein. Interacts with host NUP153. Phosphorylated by host SRPK1, SRPK2, and maybe protein kinase C or GAPDH. Phosphorylation is critical for pregenomic RNA packaging. Protein kinase C phosphorylation is stimulated by HBx protein and may play a role in transport of the viral genome to the nucleus at the late step during the viral replication cycle.

Its subcellular location is the virion. It localises to the host cytoplasm. Its function is as follows. Self assembles to form an icosahedral capsid. Most capsids appear to be large particles with an icosahedral symmetry of T=4 and consist of 240 copies of capsid protein, though a fraction forms smaller T=3 particles consisting of 180 capsid proteins. Entering capsids are transported along microtubules to the nucleus. Phosphorylation of the capsid is thought to induce exposure of nuclear localization signal in the C-terminal portion of the capsid protein that allows binding to the nuclear pore complex via the importin (karyopherin-) alpha and beta. Capsids are imported in intact form through the nuclear pore into the nuclear basket, where it probably binds NUP153. Only capsids that contain the mature viral genome can release the viral DNA and capsid protein into the nucleoplasm. Immature capsids get stuck in the basket. Capsids encapsulate the pre-genomic RNA and the P protein. Pre-genomic RNA is reverse-transcribed into DNA while the capsid is still in the cytoplasm. The capsid can then either be directed to the nucleus, providing more genomes for transcription, or bud through the endoplasmic reticulum to provide new virions. This Gorilla gorilla (western gorilla) protein is Capsid protein.